A 313-amino-acid polypeptide reads, in one-letter code: 4-hydroxyproline 2-epimerase (313 aa).

The interval 1–23 (MHVIDSHTGGEPTRVILSGGPHL) is disordered. Cysteine 85 acts as the Proton acceptor in catalysis. Residues 86–87 (GH), histidine 205, and aspartate 231 each bind substrate. The Proton donor role is filled by cysteine 235. 236 to 237 (GT) provides a ligand contact to substrate.

It belongs to the proline racemase family.

The catalysed reaction is trans-4-hydroxy-L-proline = cis-4-hydroxy-D-proline. Its function is as follows. Catalyzes the epimerization of trans-4-hydroxy-L-proline (t4LHyp) to cis-4-hydroxy-D-proline (c4DHyp). Is likely involved in a degradation pathway that converts t4LHyp to alpha-ketoglutarate. Displays no proline racemase activity. This is 4-hydroxyproline 2-epimerase from Ruegeria pomeroyi (strain ATCC 700808 / DSM 15171 / DSS-3) (Silicibacter pomeroyi).